The chain runs to 679 residues: UvrABC system protein B (679 aa).

Residues 25-176 (YGVNQGKQYQ…NVRESLRELV (152 aa)) enclose the Helicase ATP-binding domain. 38 to 45 (GATGTGKT) contributes to the ATP binding site. Residues 91 to 114 (YYDYYQPEAYVPVSDTYIAKTSSV) carry the Beta-hairpin motif. The 163-residue stretch at 429-591 (QIDDLLDEIR…IIPKPAGKKP (163 aa)) folds into the Helicase C-terminal domain. The region spanning 639-674 (PEIIDKLEGKMNLAAEELDFEQAAKLRDRIRQLRKK) is the UVR domain.

It belongs to the UvrB family. As to quaternary structure, forms a heterotetramer with UvrA during the search for lesions. Interacts with UvrC in an incision complex.

It is found in the cytoplasm. The UvrABC repair system catalyzes the recognition and processing of DNA lesions. A damage recognition complex composed of 2 UvrA and 2 UvrB subunits scans DNA for abnormalities. Upon binding of the UvrA(2)B(2) complex to a putative damaged site, the DNA wraps around one UvrB monomer. DNA wrap is dependent on ATP binding by UvrB and probably causes local melting of the DNA helix, facilitating insertion of UvrB beta-hairpin between the DNA strands. Then UvrB probes one DNA strand for the presence of a lesion. If a lesion is found the UvrA subunits dissociate and the UvrB-DNA preincision complex is formed. This complex is subsequently bound by UvrC and the second UvrB is released. If no lesion is found, the DNA wraps around the other UvrB subunit that will check the other stand for damage. This is UvrABC system protein B from Prochlorococcus marinus (strain MIT 9211).